The sequence spans 343 residues: Lumican (343 aa).

An N-terminal signal peptide occupies residues 1–18 (MTLNSLPIFLVLISGIFC). The residue at position 19 (Q19) is a Pyrrolidone carboxylic acid. Residues Y20 and Y22 each carry the sulfotyrosine modification. The LRRNT domain maps to 31–69 (DPFGPSTAVCAPECNCPLSYPTAMYCDNLKLKTIPIVPS). LRR repeat units lie at residues 70-91 (GIKYLYLRNNMIEAIEENTFDN), 94-117 (DLQWLILDHNHLENSKIKGRVFSK), 120-140 (NLKKLHINYNNLTEAVGPLPK), 141-162 (TLDDLQLSHNKITKVNPGALEG), 165-186 (NLTVIHLQNNQLKTDSISGAFK), 190-211 (SLLYLDLSFNQLTKLPTGLPHS), 212-232 (LLMLYFDNNQISNIPDEYFQG), and 235-255 (TLQYLRLSHNKLTDSGIPGNV). The N-linked (GlcNAc...) (keratan sulfate) asparagine glycan is linked to N91. N-linked (GlcNAc...) (keratan sulfate) asparagine glycosylation occurs at N130. An N-linked (GlcNAc...) (keratan sulfate) asparagine glycan is attached at N165. N257 is a glycosylation site (N-linked (GlcNAc...) (keratan sulfate) asparagine). 3 LRR repeats span residues 260–281 (SLVELDLSFNQLKSIPTVSENL), 282–301 (ENFYLQVNKINKFPLSSFCK), and 310–330 (KITHLRLDGNNLTRADLPQEM). C300 and C333 are disulfide-bonded. N320 is a glycosylation site (N-linked (GlcNAc...) asparagine).

Belongs to the small leucine-rich proteoglycan (SLRP) family. SLRP class II subfamily. In terms of assembly, binds to laminin. In terms of processing, contains keratan sulfate. As to expression, cornea and other tissues.

It is found in the secreted. The protein resides in the extracellular space. The protein localises to the extracellular matrix. The sequence is that of Lumican (LUM) from Gallus gallus (Chicken).